A 654-amino-acid polypeptide reads, in one-letter code: Pyoverdine export ATP-binding/permease protein PvdT (654 aa).

One can recognise an ABC transporter domain in the interval 6–245 (IELCDIRKAY…QPEQLQANDL (240 aa)). 43–50 (GASGSGKS) serves as a coordination point for ATP. Transmembrane regions (helical) follow at residues 282 to 302 (ALTL…LAVG), 529 to 549 (LSLM…IGVM), 596 to 616 (IVIA…VAFA), and 617 to 637 (LPAI…FGFM).

Belongs to the ABC transporter superfamily. Macrolide exporter (TC 3.A.1.122) family. As to quaternary structure, part of the tripartite efflux system PvdRT-OpmQ, which is composed of an inner membrane component with both ATPase and permease domains, PvdT, a periplasmic membrane fusion protein, PvdR, and an outer membrane component, OpmQ.

Its subcellular location is the cell inner membrane. In terms of biological role, part of the tripartite efflux system PvdRT-OpmQ required for the secretion into the extracellular milieu of the siderophore pyoverdine (PVD), which is involved in iron acquisition. This subunit binds PVD and drives its secretion by hydrolyzing ATP. The system is responsible for export of newly synthesized PVD after the final steps of biosynthesis have taken place in the periplasm. It is also responsible for recycling of PVD after internalization of ferri-PVD into the periplasm by the outer-membrane receptor FpvA and release of iron from PVD, thus making PVD available for new cycles of iron uptake. The polypeptide is Pyoverdine export ATP-binding/permease protein PvdT (Pseudomonas entomophila (strain L48)).